A 280-amino-acid chain; its full sequence is Homeobox protein Hox-B1b (280 aa).

The disordered stretch occupies residues 46-65; sequence GRLAAPTSAPHQSPGLPLHH. Residues 170 to 175 carry the Antp-type hexapeptide motif; the sequence is TFDWMK. The segment at residues 195 to 254 is a DNA-binding region (homeobox); the sequence is HNVIRTNFTTKQLTELEKEFHFNKYLTRARRVEVAASLELNETQVKIWFQNRRMKQKKRE. Positions 249-280 are disordered; sequence KQKKREKLGGVLVHREKASGPESSPKAKESEP. Residues 261–280 are compositionally biased toward basic and acidic residues; sequence VHREKASGPESSPKAKESEP.

It belongs to the Antp homeobox family. Labial subfamily.

It is found in the nucleus. Functionally, sequence-specific transcription factor which is part of a developmental regulatory system that provides cells with specific positional identities on the anterior-posterior axis. In Takifugu rubripes (Japanese pufferfish), this protein is Homeobox protein Hox-B1b (hoxb1b).